The sequence spans 697 residues: Pentatricopeptide repeat-containing protein At2g13600 (697 aa).

16 PPR repeats span residues 18–53, 54–84, 85–115, 116–150, 151–185, 186–216, 217–251, 252–282, 288–322, 324–349, 350–384, 385–419, 426–456, 457–491, 492–527, and 528–558; these read DSSP…GFSN, EIFI…MPQR, NIYT…MPER, DQCT…GFVL, NEYS…PFLS, DVYI…MGDR, NVVS…RVEP, DEVT…VVKN, DIIL…NVIA, TSMI…MAER, NVVS…SVCP, THYS…GFKF, DIFV…MMER, DCVS…GEKP, DHIT…GVAP, and LRDH…MPMQ. The type E motif stretch occupies residues 563–638; that stretch reads IWGSLLAACK…QPGCSWIKIQ (76 aa). Residues 639 to 669 form a type E(+) motif region; it reads GHDHVFMVKDKSHPRKKQIHSLLDILIAEMR.

Belongs to the PPR family. PCMP-E subfamily.

The polypeptide is Pentatricopeptide repeat-containing protein At2g13600 (PCMP-E76) (Arabidopsis thaliana (Mouse-ear cress)).